Reading from the N-terminus, the 306-residue chain is Homoserine kinase (306 aa).

Residue 95 to 105 coordinates ATP; the sequence is PQSRGLGSSAA.

It belongs to the GHMP kinase family. Homoserine kinase subfamily.

The protein localises to the cytoplasm. The catalysed reaction is L-homoserine + ATP = O-phospho-L-homoserine + ADP + H(+). It functions in the pathway amino-acid biosynthesis; L-threonine biosynthesis; L-threonine from L-aspartate: step 4/5. Functionally, catalyzes the ATP-dependent phosphorylation of L-homoserine to L-homoserine phosphate. In Corynebacterium urealyticum (strain ATCC 43042 / DSM 7109), this protein is Homoserine kinase.